A 104-amino-acid polypeptide reads, in one-letter code: Phosphoribosyl-ATP pyrophosphatase (104 aa).

This sequence belongs to the PRA-PH family.

The protein resides in the cytoplasm. The catalysed reaction is 1-(5-phospho-beta-D-ribosyl)-ATP + H2O = 1-(5-phospho-beta-D-ribosyl)-5'-AMP + diphosphate + H(+). It functions in the pathway amino-acid biosynthesis; L-histidine biosynthesis; L-histidine from 5-phospho-alpha-D-ribose 1-diphosphate: step 2/9. This chain is Phosphoribosyl-ATP pyrophosphatase (hisE), found in Methanosarcina acetivorans (strain ATCC 35395 / DSM 2834 / JCM 12185 / C2A).